Here is a 151-residue protein sequence, read N- to C-terminus: MKCPYCAYGESKVVDSRSTEDGSSIRRRRECLKCNRRYTTYEKIETTPILVIKKNMSREYFDRNKIVNGLMKACQKRPVSRKQIEQIADEVERHISNEMLTEVNTDKIGQIIMKNLKKIDEVSYVRFASVYRQFKDINTFMKEIKNLMDKN.

A zinc finger lies at Cys-3–Cys-34. Positions Ile-49–Thr-139 constitute an ATP-cone domain.

The protein belongs to the NrdR family. It depends on Zn(2+) as a cofactor.

In terms of biological role, negatively regulates transcription of bacterial ribonucleotide reductase nrd genes and operons by binding to NrdR-boxes. The chain is Transcriptional repressor NrdR from Clostridium botulinum (strain Loch Maree / Type A3).